A 400-amino-acid chain; its full sequence is Argininosuccinate synthase (400 aa).

Residues 11-19 and Ala38 contribute to the ATP site; that span reads AYSGGLDTS. L-citrulline-binding residues include Tyr89 and Ser94. Gly119 provides a ligand contact to ATP. L-aspartate contacts are provided by Thr121, Asn125, and Asp126. Asn125 serves as a coordination point for L-citrulline. Arg129, Ser178, Ser187, Glu263, and Tyr275 together coordinate L-citrulline.

Belongs to the argininosuccinate synthase family. Type 1 subfamily. In terms of assembly, homotetramer.

It localises to the cytoplasm. It carries out the reaction L-citrulline + L-aspartate + ATP = 2-(N(omega)-L-arginino)succinate + AMP + diphosphate + H(+). The protein operates within amino-acid biosynthesis; L-arginine biosynthesis; L-arginine from L-ornithine and carbamoyl phosphate: step 2/3. In Desulfatibacillum aliphaticivorans, this protein is Argininosuccinate synthase.